We begin with the raw amino-acid sequence, 383 residues long: MKNKLPPFIEIYRALIATPSISATEEALDQSNADLITLLADWFKDLGFNVEVQPVPGTRNKFNMLASIGQGAGGLLLAGHTDTVPFDDGRWTRDPFTLTEHDGKLYGLGTADMKGFFAFILDALRDVDVTKLKKPLYILATADEETSMAGARYFAETTALRPDCAIIGEPTSLQPVRAHKGHISNAIRIQGQSGHSSDPARGVNAIELMHDAIGHILQLRDNLKERYHYEAFTVPYPTLNLGHIHGGDASNRICACCELHMDIRPLPGMTLNELNGLLNDALAPVSERWPGRLTVDELHPPIPGYECPPNHQLVEVVEKLLGAKTEVVNYCTEAPFIQTLCPTLVLGPGSINQAHQPDEYLETRFIKPTRELITQVIHHFCWH.

Residue histidine 80 coordinates Zn(2+). The active site involves aspartate 82. Aspartate 112 is a Zn(2+) binding site. Glutamate 144 is an active-site residue. Residues glutamate 145, glutamate 169, and histidine 355 each contribute to the Zn(2+) site.

It belongs to the peptidase M20A family. ArgE subfamily. As to quaternary structure, homodimer. Zn(2+) serves as cofactor. The cofactor is Co(2+). Requires glutathione as cofactor.

The protein resides in the cytoplasm. It carries out the reaction N(2)-acetyl-L-ornithine + H2O = L-ornithine + acetate. Its pathway is amino-acid biosynthesis; L-arginine biosynthesis; L-ornithine from N(2)-acetyl-L-ornithine (linear): step 1/1. Catalyzes the hydrolysis of the amide bond of N(2)-acetylated L-amino acids. Cleaves the acetyl group from N-acetyl-L-ornithine to form L-ornithine, an intermediate in L-arginine biosynthesis pathway, and a branchpoint in the synthesis of polyamines. This Escherichia coli (strain K12 / MC4100 / BW2952) protein is Acetylornithine deacetylase.